Here is a 30-residue protein sequence, read N- to C-terminus: Cyclotide hyen-H (30 aa).

Residues 1-30 constitute a cross-link (cyclopeptide (Lys-Asp)); the sequence is KIPCGESCVYIPCISSVLGCSCSNKVCYKD. 3 disulfide bridges follow: C4–C20, C8–C22, and C13–C27.

In terms of processing, this is a cyclic peptide. Detected in stems (at protein level).

In terms of biological role, probably participates in a plant defense mechanism. The protein is Cyclotide hyen-H of Pigea enneasperma (Spade flower).